We begin with the raw amino-acid sequence, 245 residues long: Zinc finger protein 575 (245 aa).

The segment at 1-67 is disordered; sequence MLERGAESAA…PPQRPHRCPD (67 aa). Low complexity predominate over residues 36–49; the sequence is PSQSAPGPTASAGS. Residues 52-63 show a composition bias toward basic residues; that stretch reads RPRRRPPPQRPH. 6 C2H2-type zinc fingers span residues 63-85, 91-113, 119-141, 147-169, 177-199, and 213-240; these read HRCPDCDKAFSYPSKLATHRLAH, HPCPDCPKAFSYPSKLAAHRLTH, HPCPHCPKSFGHRSKLAAHLWTH, YPCPDCPKSFCYPSKLAAHRHTH, YPCPHCPKAFSFPSKLAAHRLCH, and HRCSSCGQAFGQRRLLLLHQRSHHQVEH.

Belongs to the krueppel C2H2-type zinc-finger protein family.

Its subcellular location is the nucleus. May be involved in transcriptional regulation. This is Zinc finger protein 575 (ZNF575) from Homo sapiens (Human).